The primary structure comprises 205 residues: SREBP regulating gene protein (205 aa).

Topologically, residues 1–16 are cytoplasmic; the sequence is MLNLAALLWRRLLRKR. A helical transmembrane segment spans residues 17–35; sequence WVLALVFGLSLVYFLSSTF. Residues 36–205 are Lumenal-facing; that stretch reads KQEERAVRDR…GESPPELFPA (170 aa). An N-linked (GlcNAc...) asparagine glycan is attached at asparagine 67.

Belongs to the SPRING family. In terms of assembly, interacts with SCAP. As to expression, ubiquitously expressed with a slightly higher expression in the liver and kidney.

It localises to the golgi apparatus membrane. Functionally, positively regulates hepatic SREBP signaling pathway by modulating the proper localization of SCAP (SREBP cleavage-activating protein) to the endoplasmic reticulum, thereby controlling the level of functional SCAP. Plays a crucial role during embryogenesis. In Mus musculus (Mouse), this protein is SREBP regulating gene protein (Spring1).